The sequence spans 150 residues: D-aminoacyl-tRNA deacylase (150 aa).

Residues 140 to 141 carry the Gly-cisPro motif, important for rejection of L-amino acids motif; it reads GP.

It belongs to the DTD family. As to quaternary structure, homodimer.

The protein localises to the cytoplasm. It carries out the reaction glycyl-tRNA(Ala) + H2O = tRNA(Ala) + glycine + H(+). It catalyses the reaction a D-aminoacyl-tRNA + H2O = a tRNA + a D-alpha-amino acid + H(+). An aminoacyl-tRNA editing enzyme that deacylates mischarged D-aminoacyl-tRNAs. Also deacylates mischarged glycyl-tRNA(Ala), protecting cells against glycine mischarging by AlaRS. Acts via tRNA-based rather than protein-based catalysis; rejects L-amino acids rather than detecting D-amino acids in the active site. By recycling D-aminoacyl-tRNA to D-amino acids and free tRNA molecules, this enzyme counteracts the toxicity associated with the formation of D-aminoacyl-tRNA entities in vivo and helps enforce protein L-homochirality. The polypeptide is D-aminoacyl-tRNA deacylase (DTD1) (Eremothecium gossypii (strain ATCC 10895 / CBS 109.51 / FGSC 9923 / NRRL Y-1056) (Yeast)).